A 696-amino-acid polypeptide reads, in one-letter code: MWLQVTNCSTLHSSLSYCGANTLSDMAKNLILWLVIAVVLMSVFQSFGPSDSAGRQVDYTTFVREIGQDQIREARFNEREITVFKRDNTRYVTYLPVFNDQKLLDDLINANVKVLGTPPEEPSLLASIFISWFPMLLLIGVWVFFMRQMQGGGGGKGAMSFGKSKARMMSEDQIKTTFADVAGCDEAKEDVKELVDYLRDPSRFQKLGGKIPTGILLVGPPGTGKTLLAKAIAGEAKVPFFTISGSDFVEMFVGVGASRVRDMFEQAKKAAPCIIFIDEIDAVGRQRGAGVGGGHDEREQTLNQMLVEMDGFEGNEGVIVIAATNRPDVLDPALLRPGRFDRQVVVGLPDVRGREQILKVHMRKVPLEGDVEPSLIARGTPGFSGADLANLVNEAALFAARGNKRVVSMQEFELAKDKIMMGAERKSMVMSEDQKESTAYHEAGHAIIGRLVPDHDPVYKVSIIPRGRALGVTMYLPEKDRISHSREFLESMLSSLYGGRLAEELIYGVDKVSTGASNDIERATDIARKMVTQWGFSEKMGPVLYADDEGEVFLGRSVTQTKHMSDDTARAIDMEIRALIDRNYERAREILAQNMDIMHAMKDALMKYETIDAAQIDDLMARKSEIRAPKGWGDTDDVMKSSPTTSESAPEAKTESAPEAKAEANVETEEKPVAADSEELKPKAEQAPKEDDKPQA.

Residues 1 to 29 (MWLQVTNCSTLHSSLSYCGANTLSDMAKN) are Cytoplasmic-facing. The chain crosses the membrane as a helical span at residues 30-50 (LILWLVIAVVLMSVFQSFGPS). Residues 51-124 (DSAGRQVDYT…LGTPPEEPSL (74 aa)) lie on the Periplasmic side of the membrane. A helical membrane pass occupies residues 125-145 (LASIFISWFPMLLLIGVWVFF). At 146–696 (MRQMQGGGGG…APKEDDKPQA (551 aa)) the chain is on the cytoplasmic side. 219-226 (GPPGTGKT) lines the ATP pocket. Residue His-441 coordinates Zn(2+). Residue Glu-442 is part of the active site. Zn(2+) contacts are provided by His-445 and Asp-519. Positions 627-696 (RAPKGWGDTD…APKEDDKPQA (70 aa)) are disordered. Positions 650-696 (PEAKTESAPEAKAEANVETEEKPVAADSEELKPKAEQAPKEDDKPQA) are enriched in basic and acidic residues.

This sequence in the central section; belongs to the AAA ATPase family. In the C-terminal section; belongs to the peptidase M41 family. In terms of assembly, homohexamer. Zn(2+) serves as cofactor.

The protein localises to the cell inner membrane. Functionally, acts as a processive, ATP-dependent zinc metallopeptidase for both cytoplasmic and membrane proteins. Plays a role in the quality control of integral membrane proteins. This chain is ATP-dependent zinc metalloprotease FtsH, found in Photobacterium profundum (strain SS9).